A 195-amino-acid polypeptide reads, in one-letter code: 3-isopropylmalate dehydratase small subunit (195 aa).

It belongs to the LeuD family. LeuD type 1 subfamily. As to quaternary structure, heterodimer of LeuC and LeuD.

The enzyme catalyses (2R,3S)-3-isopropylmalate = (2S)-2-isopropylmalate. It participates in amino-acid biosynthesis; L-leucine biosynthesis; L-leucine from 3-methyl-2-oxobutanoate: step 2/4. In terms of biological role, catalyzes the isomerization between 2-isopropylmalate and 3-isopropylmalate, via the formation of 2-isopropylmaleate. This is 3-isopropylmalate dehydratase small subunit from Rubrobacter xylanophilus (strain DSM 9941 / JCM 11954 / NBRC 16129 / PRD-1).